A 322-amino-acid chain; its full sequence is Protein prune homolog 2 (322 aa).

A disordered region spans residues 1–110; that stretch reads MDIHFEEGVL…SIPEYTAEEE (110 aa). Residues 40-52 show a composition bias toward polar residues; it reads PNINLSLDQSEGS. Acidic residues predominate over residues 57 to 80; the sequence is DNLDSPDEIDINVDELDTPDEADS. Positions 130–291 constitute a CRAL-TRIO domain; the sequence is DMKVIEPYRR…SIIKYDEEKS (162 aa).

It is found in the cytoplasm. In terms of biological role, may play an important role in regulating differentiation, survival and aggressiveness of the tumor cells. The chain is Protein prune homolog 2 (Prune2) from Rattus norvegicus (Rat).